The chain runs to 77 residues: Lantipeptide prochlorosin 4.3 (77 aa).

A propeptide spanning residues 1–64 (MSEEQLKAFI…DDELEGVAGG (64 aa)) is cleaved from the precursor. A 2,3-didehydrobutyrine modification is found at Thr65. Positions 67–70 (SGGC) form a cross-link, lanthionine (Ser-Cys). A cross-link (beta-methyllanthionine (Thr-Cys)) is located at residues 72–76 (TSMFC).

Cross-links are proved in vitro, when coepressed in E.coli with the ProcM lanthionine synthetase. Post-translationally, the lanthionine residue has both a DL configuration (with 2S,6R stereochemistry) and a LL configuration (with 2R,6R stereochemistry). DL and LL diastomers have a 4:1 ratio. It is unknown whether nonenzymatic cyclization occur, but authors favor a model in which ProcM does generate all thioether cross-links. The beta-methyllanthionine residue has a DL configuration (with 2S,3S,6R stereochemistry). In terms of processing, maturation of prochlorosin involves the enzymatic conversion of Thr, and Ser into dehydrated AA and the formation of thioether bonds with cysteines. This is followed by membrane translocation and cleavage of the modified precursor.

It is found in the secreted. Functionally, lanthionine-containing peptide (lantipeptide) with unknown function. Does not show antibiotic activity against Lactococcus lactis 117 and Bacillus subtilis 6633 bacteria. Organisms that produce this peptide live in oligotrophic environments at very dilute concentrations, suggesting this peptide is not secreted to influence other bacteria. This chain is Lantipeptide prochlorosin 4.3, found in Prochlorococcus marinus (strain MIT 9313).